The following is a 245-amino-acid chain: GATA zinc finger domain-containing protein 1 (245 aa).

Residues 9–33 (CSMCKTNTSSMWKKGSQGEILCNNC) form a GATA-type zinc finger. Residues 39–70 (TAAGGNNNNNSSSSTSGSSSYTGTTFASTSTS) show a composition bias toward low complexity. A disordered region spans residues 39–110 (TAAGGNNNNN…PAAEKKVSTK (72 aa)). Over residues 71 to 80 (QQSNGGNTKQ) the composition is skewed to polar residues.

It is found in the nucleus. Component of some chromatin complex recruited to chromatin sites methylated 'Lys-4' of histone H3 (H3K4me), with a preference for trimethylated form (H3K4me3). In Xenopus laevis (African clawed frog), this protein is GATA zinc finger domain-containing protein 1 (gatad1).